Here is a 436-residue protein sequence, read N- to C-terminus: ATP-dependent protease ATPase subunit HslU (436 aa).

Residues Ile-19, 61–65 (GVGKT), Asp-249, Glu-314, and Arg-386 each bind ATP.

This sequence belongs to the ClpX chaperone family. HslU subfamily. A double ring-shaped homohexamer of HslV is capped on each side by a ring-shaped HslU homohexamer. The assembly of the HslU/HslV complex is dependent on binding of ATP.

The protein resides in the cytoplasm. Functionally, ATPase subunit of a proteasome-like degradation complex; this subunit has chaperone activity. The binding of ATP and its subsequent hydrolysis by HslU are essential for unfolding of protein substrates subsequently hydrolyzed by HslV. HslU recognizes the N-terminal part of its protein substrates and unfolds these before they are guided to HslV for hydrolysis. This chain is ATP-dependent protease ATPase subunit HslU, found in Bartonella tribocorum (strain CIP 105476 / IBS 506).